Consider the following 195-residue polypeptide: Holliday junction branch migration complex subunit RuvA (195 aa).

The tract at residues 1-61 is domain I; that stretch reads MYEYFEGIIS…DTGITLYGFQ (61 aa). The tract at residues 62–140 is domain II; that stretch reads DQDDKGLFLK…DYVARLDKPE (79 aa). Positions 141 to 146 are flexible linker; sequence NGEEIS. The segment at 146–195 is domain III; it reads SPALNDALLALIALGYTQKEVDRITPKLVEIEADTADQYIKKGLALLLKK.

It belongs to the RuvA family. Homotetramer. Forms an RuvA(8)-RuvB(12)-Holliday junction (HJ) complex. HJ DNA is sandwiched between 2 RuvA tetramers; dsDNA enters through RuvA and exits via RuvB. An RuvB hexamer assembles on each DNA strand where it exits the tetramer. Each RuvB hexamer is contacted by two RuvA subunits (via domain III) on 2 adjacent RuvB subunits; this complex drives branch migration. In the full resolvosome a probable DNA-RuvA(4)-RuvB(12)-RuvC(2) complex forms which resolves the HJ.

The protein resides in the cytoplasm. Functionally, the RuvA-RuvB-RuvC complex processes Holliday junction (HJ) DNA during genetic recombination and DNA repair, while the RuvA-RuvB complex plays an important role in the rescue of blocked DNA replication forks via replication fork reversal (RFR). RuvA specifically binds to HJ cruciform DNA, conferring on it an open structure. The RuvB hexamer acts as an ATP-dependent pump, pulling dsDNA into and through the RuvAB complex. HJ branch migration allows RuvC to scan DNA until it finds its consensus sequence, where it cleaves and resolves the cruciform DNA. This chain is Holliday junction branch migration complex subunit RuvA, found in Lactobacillus acidophilus (strain ATCC 700396 / NCK56 / N2 / NCFM).